A 170-amino-acid polypeptide reads, in one-letter code: Large ribosomal subunit protein uL22z (170 aa).

The protein belongs to the universal ribosomal protein uL22 family.

The chain is Large ribosomal subunit protein uL22z from Hordeum vulgare (Barley).